The chain runs to 246 residues: MAGHSKWANTRHRKAAQDAKRGKIFTKIIRELVTAAKLGGGDPDANPRLRAAVDKALANNMTRDTLNRAIARGVGGDEDSNMETIIYEGYGPGGTAIMIECLSDNRNRTVAEVRHAFSKCGGNLGTDGSVAYLFSKKGVISFEKGDEDTIMEAALEAGAEDVVTYDDGAIDVYTAWEEMGKVRDALEAAGLKADSAEVSMIPSTKADMDAETAPKLLRLIDMLEDCDDVQEVYHNGEISDEVAATL.

A disordered region spans residues 1–20 (MAGHSKWANTRHRKAAQDAK).

It belongs to the TACO1 family.

The protein resides in the cytoplasm. This chain is Probable transcriptional regulatory protein YebC, found in Salmonella typhimurium (strain LT2 / SGSC1412 / ATCC 700720).